A 376-amino-acid polypeptide reads, in one-letter code: MSNVTTPWWKQWDPSEVTLADKTPDDVWKTCVLQGVYFGGNEYNGNLGARISSVFVILFVSTFFTMFPLISTKVKRLRIPLYVYLFAKYFGSGVIVATAFIHLMDPAYGAIGGTTCVGQTGNWGLYSWCPAIMLTSLTFTFLTDLFSSVWVERKYGLSHDHTHDEIKDTVVRNTAAVSSENDNENGTANGSHDTKNGVEYYEDSDATSMDVVQSFQAQFYAFLILEFGVIFHSVMIGLNLGSVGDEFSSLYPVLVFHQSFEGLGIGARLSAIEFPRSKRWWPWALCVAYGLTTPICVAIGLGVRTRYVSGSYTALVISGVLDAISAGILLYTGLVELLARDFIFNPQRTKDLRELSFNVICTLFGAGIMALIGKWA.

The Extracellular portion of the chain corresponds to 1 to 50 (MSNVTTPWWKQWDPSEVTLADKTPDDVWKTCVLQGVYFGGNEYNGNLGAR). Residues 51-71 (ISSVFVILFVSTFFTMFPLIS) form a helical membrane-spanning segment. The Cytoplasmic segment spans residues 72-80 (TKVKRLRIP). A helical membrane pass occupies residues 81 to 101 (LYVYLFAKYFGSGVIVATAFI). The Extracellular portion of the chain corresponds to 102–122 (HLMDPAYGAIGGTTCVGQTGN). A helical transmembrane segment spans residues 123 to 143 (WGLYSWCPAIMLTSLTFTFLT). Over 144 to 216 (DLFSSVWVER…TSMDVVQSFQ (73 aa)) the chain is Cytoplasmic. The span at 177 to 191 (VSSENDNENGTANGS) shows a compositional bias: polar residues. The tract at residues 177–196 (VSSENDNENGTANGSHDTKN) is disordered. A helical membrane pass occupies residues 217 to 237 (AQFYAFLILEFGVIFHSVMIG). The Extracellular portion of the chain corresponds to 238 to 242 (LNLGS). Residues 243–263 (VGDEFSSLYPVLVFHQSFEGL) traverse the membrane as a helical segment. The Cytoplasmic portion of the chain corresponds to 264–278 (GIGARLSAIEFPRSK). A helical transmembrane segment spans residues 279 to 299 (RWWPWALCVAYGLTTPICVAI). Residues 300–310 (GLGVRTRYVSG) are Extracellular-facing. A helical membrane pass occupies residues 311 to 331 (SYTALVISGVLDAISAGILLY). At 332–354 (TGLVELLARDFIFNPQRTKDLRE) the chain is on the cytoplasmic side. A helical transmembrane segment spans residues 355–375 (LSFNVICTLFGAGIMALIGKW). Residue A376 is a topological domain, extracellular.

Belongs to the ZIP transporter (TC 2.A.5) family.

The protein localises to the membrane. Its function is as follows. High-affinity zinc transport protein. The chain is Zinc-regulated transporter 1 (ZRT1) from Saccharomyces cerevisiae (strain ATCC 204508 / S288c) (Baker's yeast).